The sequence spans 411 residues: Translation initiation factor 2 subunit gamma (411 aa).

The region spanning 9-203 (QAEVNIGMVG…AIEEFIPTPK (195 aa)) is the tr-type G domain. Positions 18–25 (GHVDHGKT) are G1. The Mg(2+) site is built by Asp-21, Thr-25, Gly-46, and Thr-48. 21-26 (DHGKTT) is a GTP binding site. A G2 region spans residues 46–50 (GITIK). 4 residues coordinate Zn(2+): Cys-61, Cys-64, Cys-73, and Cys-76. The tract at residues 90–93 (DSPG) is G3. GTP contacts are provided by residues 146 to 149 (NKIE) and 181 to 183 (SAL). The G4 stretch occupies residues 146–149 (NKIE). Residues 181–183 (SAL) form a G5 region.

This sequence belongs to the TRAFAC class translation factor GTPase superfamily. Classic translation factor GTPase family. EIF2G subfamily. Heterotrimer composed of an alpha, a beta and a gamma chain. The cofactor is Mg(2+).

The catalysed reaction is GTP + H2O = GDP + phosphate + H(+). EIF-2 functions in the early steps of protein synthesis by forming a ternary complex with GTP and initiator tRNA. This is Translation initiation factor 2 subunit gamma from Pyrococcus furiosus (strain ATCC 43587 / DSM 3638 / JCM 8422 / Vc1).